The following is a 260-amino-acid chain: Glucosamine-6-phosphate deaminase (260 aa).

Asp-67 functions as the Proton acceptor; for enolization step in the catalytic mechanism. Asp-136 (for ring-opening step) is an active-site residue. His-138 (proton acceptor; for ring-opening step) is an active-site residue. Glu-143 acts as the For ring-opening step in catalysis.

Belongs to the glucosamine/galactosamine-6-phosphate isomerase family. NagB subfamily.

The enzyme catalyses alpha-D-glucosamine 6-phosphate + H2O = beta-D-fructose 6-phosphate + NH4(+). It functions in the pathway amino-sugar metabolism; N-acetylneuraminate degradation; D-fructose 6-phosphate from N-acetylneuraminate: step 5/5. Its function is as follows. Catalyzes the reversible isomerization-deamination of glucosamine 6-phosphate (GlcN6P) to form fructose 6-phosphate (Fru6P) and ammonium ion. This is Glucosamine-6-phosphate deaminase from Arthrobacter sp. (strain FB24).